A 134-amino-acid polypeptide reads, in one-letter code: UPF0412 protein YaaI (134 aa).

The N-terminal stretch at 1–23 (MRSVLTISAGLLFGLALSSVAHA) is a signal peptide.

This sequence belongs to the UPF0412 family.

The sequence is that of UPF0412 protein YaaI from Salmonella agona (strain SL483).